The sequence spans 177 residues: Bifunctional protein PyrR (177 aa).

Positions 99–111 (VVLVDDVLFTGRT) match the PRPP-binding motif.

It belongs to the purine/pyrimidine phosphoribosyltransferase family. PyrR subfamily.

It catalyses the reaction UMP + diphosphate = 5-phospho-alpha-D-ribose 1-diphosphate + uracil. Regulates the transcription of the pyrimidine nucleotide (pyr) operon in response to exogenous pyrimidines. In terms of biological role, also displays a weak uracil phosphoribosyltransferase activity which is not physiologically significant. The sequence is that of Bifunctional protein PyrR from Geobacter sp. (strain M21).